Here is a 335-residue protein sequence, read N- to C-terminus: Ketol-acid reductoisomerase (NADP(+)) 2 (335 aa).

A KARI N-terminal Rossmann domain is found at 1–180 (MKTYYEQDAN…GCTRAGVIET (180 aa)). NADP(+)-binding positions include 24 to 27 (YGSQ), arginine 47, serine 51, and 81 to 84 (DEQQ). The active site involves histidine 106. Glycine 132 provides a ligand contact to NADP(+). Positions 181–326 (TFQEETETDL…EELREMMSWI (146 aa)) constitute a KARI C-terminal knotted domain. Mg(2+) contacts are provided by aspartate 189, glutamate 193, glutamate 225, and glutamate 229. Serine 250 is a binding site for substrate.

The protein belongs to the ketol-acid reductoisomerase family. Mg(2+) serves as cofactor.

The catalysed reaction is (2R)-2,3-dihydroxy-3-methylbutanoate + NADP(+) = (2S)-2-acetolactate + NADPH + H(+). The enzyme catalyses (2R,3R)-2,3-dihydroxy-3-methylpentanoate + NADP(+) = (S)-2-ethyl-2-hydroxy-3-oxobutanoate + NADPH + H(+). It participates in amino-acid biosynthesis; L-isoleucine biosynthesis; L-isoleucine from 2-oxobutanoate: step 2/4. Its pathway is amino-acid biosynthesis; L-valine biosynthesis; L-valine from pyruvate: step 2/4. In terms of biological role, involved in the biosynthesis of branched-chain amino acids (BCAA). Catalyzes an alkyl-migration followed by a ketol-acid reduction of (S)-2-acetolactate (S2AL) to yield (R)-2,3-dihydroxy-isovalerate. In the isomerase reaction, S2AL is rearranged via a Mg-dependent methyl migration to produce 3-hydroxy-3-methyl-2-ketobutyrate (HMKB). In the reductase reaction, this 2-ketoacid undergoes a metal-dependent reduction by NADPH to yield (R)-2,3-dihydroxy-isovalerate. The polypeptide is Ketol-acid reductoisomerase (NADP(+)) 2 (Bacillus anthracis).